The sequence spans 695 residues: Elongation factor G 1 (695 aa).

The tr-type G domain occupies 6–282 (STFRNIGISA…AITYYLPDPT (277 aa)). GTP contacts are provided by residues 15 to 22 (AHIDSGKT), 82 to 86 (DTPGH), and 136 to 139 (NKCD).

Belongs to the TRAFAC class translation factor GTPase superfamily. Classic translation factor GTPase family. EF-G/EF-2 subfamily.

Its subcellular location is the cytoplasm. Its function is as follows. Catalyzes the GTP-dependent ribosomal translocation step during translation elongation. During this step, the ribosome changes from the pre-translocational (PRE) to the post-translocational (POST) state as the newly formed A-site-bound peptidyl-tRNA and P-site-bound deacylated tRNA move to the P and E sites, respectively. Catalyzes the coordinated movement of the two tRNA molecules, the mRNA and conformational changes in the ribosome. This chain is Elongation factor G 1 (fusA), found in Treponema pallidum (strain Nichols).